Reading from the N-terminus, the 169-residue chain is Ubiquitin-conjugating enzyme E2 2 (169 aa).

Positions A4 to V150 constitute a UBC core domain. The active-site Glycyl thioester intermediate is C88.

The protein belongs to the ubiquitin-conjugating enzyme family.

It localises to the cytoplasm. The protein localises to the nucleus. The catalysed reaction is S-ubiquitinyl-[E1 ubiquitin-activating enzyme]-L-cysteine + [E2 ubiquitin-conjugating enzyme]-L-cysteine = [E1 ubiquitin-activating enzyme]-L-cysteine + S-ubiquitinyl-[E2 ubiquitin-conjugating enzyme]-L-cysteine.. It participates in protein modification; protein ubiquitination. Functionally, catalyzes the covalent attachment of ubiquitin to other proteins. Plays a role in transcription regulation by catalyzing the monoubiquitination of histone H2B to form H2BK123ub1. H2BK123ub1 gives a specific tag for epigenetic transcriptional activation and is also a prerequisite for H3K4me and H3K79me formation. Also involved in postreplication repair of UV-damaged DNA, in N-end rule-dependent protein degradation and in sporulation. The protein is Ubiquitin-conjugating enzyme E2 2 (UBC2) of Cryptococcus neoformans var. neoformans serotype D (strain B-3501A) (Filobasidiella neoformans).